The chain runs to 100 residues: Urease subunit gamma (100 aa).

Belongs to the urease gamma subunit family. As to quaternary structure, heterotrimer of UreA (gamma), UreB (beta) and UreC (alpha) subunits. Three heterotrimers associate to form the active enzyme.

The protein resides in the cytoplasm. The catalysed reaction is urea + 2 H2O + H(+) = hydrogencarbonate + 2 NH4(+). The protein operates within nitrogen metabolism; urea degradation; CO(2) and NH(3) from urea (urease route): step 1/1. This chain is Urease subunit gamma, found in Burkholderia mallei (strain NCTC 10247).